We begin with the raw amino-acid sequence, 84 residues long: MIWTAVIKGSALVTFVQGAMVLVDKIFGEEILPHRIYSSAEASQLLGMDRLEVLGLIRSGTIKAKKVGDNYRILGSNLVDYMNR.

It belongs to the magnetosome MamR family.

Its subcellular location is the magnetosome. May play a role in controlling magnetite number and size but not in control of magnetite morphology. This is Magnetosome protein MamR from Paramagnetospirillum magneticum (strain ATCC 700264 / AMB-1) (Magnetospirillum magneticum).